We begin with the raw amino-acid sequence, 648 residues long: Macrolide export ATP-binding/permease protein MacB (648 aa).

The 246-residue stretch at 6-251 folds into the ABC transporter domain; it reads IRVRGVSRAF…GPSAGWRGAI (246 aa). 42–49 is an ATP binding site; that stretch reads GASGSGKS. 4 helical membrane passes run 273-293, 528-548, 572-592, and 613-633; these read LLTMLGIIIGIASVAAISALG, VAVISLIVGGIGVMNIMLVSV, FLIEAVMVCLVGGLMGIMLAL, and SIIVAFACSTLIGIVFGFLPA.

It belongs to the ABC transporter superfamily. Macrolide exporter (TC 3.A.1.122) family. In terms of assembly, homodimer.

It is found in the cell inner membrane. Its function is as follows. Non-canonical ABC transporter that contains transmembrane domains (TMD), which form a pore in the inner membrane, and an ATP-binding domain (NBD), which is responsible for energy generation. Confers resistance against macrolides. The protein is Macrolide export ATP-binding/permease protein MacB of Agrobacterium fabrum (strain C58 / ATCC 33970) (Agrobacterium tumefaciens (strain C58)).